The chain runs to 447 residues: Probable glycine dehydrogenase (decarboxylating) subunit 1 (447 aa).

This sequence belongs to the GcvP family. N-terminal subunit subfamily. As to quaternary structure, the glycine cleavage system is composed of four proteins: P, T, L and H. In this organism, the P 'protein' is a heterodimer of two subunits.

It catalyses the reaction N(6)-[(R)-lipoyl]-L-lysyl-[glycine-cleavage complex H protein] + glycine + H(+) = N(6)-[(R)-S(8)-aminomethyldihydrolipoyl]-L-lysyl-[glycine-cleavage complex H protein] + CO2. Functionally, the glycine cleavage system catalyzes the degradation of glycine. The P protein binds the alpha-amino group of glycine through its pyridoxal phosphate cofactor; CO(2) is released and the remaining methylamine moiety is then transferred to the lipoamide cofactor of the H protein. The chain is Probable glycine dehydrogenase (decarboxylating) subunit 1 from Bacillus cereus (strain ATCC 10987 / NRS 248).